We begin with the raw amino-acid sequence, 1407 residues long: DNA-directed RNA polymerase subunit beta' (1407 aa).

Residues C70, C72, C85, and C88 each contribute to the Zn(2+) site. Positions 460, 462, and 464 each coordinate Mg(2+). Zn(2+) contacts are provided by C814, C888, C895, and C898. K972 bears the N6-acetyllysine mark.

It belongs to the RNA polymerase beta' chain family. In terms of assembly, the RNAP catalytic core consists of 2 alpha, 1 beta, 1 beta' and 1 omega subunit. When a sigma factor is associated with the core the holoenzyme is formed, which can initiate transcription. Requires Mg(2+) as cofactor. Zn(2+) is required as a cofactor.

The enzyme catalyses RNA(n) + a ribonucleoside 5'-triphosphate = RNA(n+1) + diphosphate. In terms of biological role, DNA-dependent RNA polymerase catalyzes the transcription of DNA into RNA using the four ribonucleoside triphosphates as substrates. The protein is DNA-directed RNA polymerase subunit beta' of Escherichia coli (strain SMS-3-5 / SECEC).